Reading from the N-terminus, the 124-residue chain is S-adenosylmethionine decarboxylase proenzyme (124 aa).

Residue Ser71 is the Schiff-base intermediate with substrate; via pyruvic acid of the active site. Ser71 bears the Pyruvic acid (Ser); by autocatalysis mark. The active-site Proton acceptor; for processing activity is the His76. Cys91 functions as the Proton donor; for catalytic activity in the catalytic mechanism.

The protein belongs to the prokaryotic AdoMetDC family. Type 1 subfamily. As to quaternary structure, heterotetramer of two alpha and two beta chains arranged as a dimer of alpha/beta heterodimers. Pyruvate is required as a cofactor. Is synthesized initially as an inactive proenzyme. Formation of the active enzyme involves a self-maturation process in which the active site pyruvoyl group is generated from an internal serine residue via an autocatalytic post-translational modification. Two non-identical subunits are generated from the proenzyme in this reaction, and the pyruvate is formed at the N-terminus of the alpha chain, which is derived from the carboxyl end of the proenzyme. The post-translation cleavage follows an unusual pathway, termed non-hydrolytic serinolysis, in which the side chain hydroxyl group of the serine supplies its oxygen atom to form the C-terminus of the beta chain, while the remainder of the serine residue undergoes an oxidative deamination to produce ammonia and the pyruvoyl group blocking the N-terminus of the alpha chain.

The enzyme catalyses S-adenosyl-L-methionine + H(+) = S-adenosyl 3-(methylsulfanyl)propylamine + CO2. It participates in amine and polyamine biosynthesis; S-adenosylmethioninamine biosynthesis; S-adenosylmethioninamine from S-adenosyl-L-methionine: step 1/1. Competitively inhibited by methylglyoxal bis-guanylhydrazone. Irreversibly inhibited by NaBH(4) in vitro. In terms of biological role, catalyzes the decarboxylation of S-adenosylmethionine to S-adenosylmethioninamine (dcAdoMet), the propylamine donor required for the synthesis of the polyamines spermine and spermidine from the diamine putrescine. Has no arginine decarboxylase (ArgDC) activity. This chain is S-adenosylmethionine decarboxylase proenzyme (speH), found in Saccharolobus solfataricus (strain ATCC 35092 / DSM 1617 / JCM 11322 / P2) (Sulfolobus solfataricus).